Consider the following 389-residue polypeptide: Inactive serine/threonine-protein kinase ZRK12 (389 aa).

The Protein kinase domain maps to 41–342; it reads SADEIRKATN…ETQFDSHQDI (302 aa). ATP-binding positions include 47–55 and Lys-84; that span reads KATNNFGVS. Phosphotyrosine is present on Tyr-129. Residue Thr-214 is modified to Phosphothreonine. Phosphotyrosine is present on Tyr-222.

This sequence belongs to the protein kinase superfamily. Ser/Thr protein kinase family.

Functionally, together with RPP13L4/ZAR1, involved in the regulation of the ambient temperature-sensitive intersection of growth and immune response in the absence of pathogens. The protein is Inactive serine/threonine-protein kinase ZRK12 of Arabidopsis thaliana (Mouse-ear cress).